A 176-amino-acid polypeptide reads, in one-letter code: Transcription factor 21 (176 aa).

Residues 1–84 (MSTGSISDVD…QVQRNAANAR (84 aa)) form a disordered region. Residues 31–44 (GTSNESTEDSSNCE) are compositionally biased toward polar residues. Residues 76–128 (VQRNAANARERARMRVLSKAFSRLKTTLPWVPPDTKLSKLDTLRLASSYIAHL) form the bHLH domain.

In terms of assembly, efficient DNA binding requires dimerization with another bHLH protein. In terms of tissue distribution, expressed in the cranial paraxial mesoderm from 20 hpf and subsequently becomes restricted to the pharyngeal mesoderm that will form the muscle. Expression in the proepicardial organ is first seen at 40hpf in a cluster of cells between the myocardium and yolk. Also expressed in the developing arches. Expression begins to surround the heart by day 3 of development, and by 96 hpf, expression is restricted to the outer epicardial layer surrounding the myocardium.

Its subcellular location is the nucleus. In terms of biological role, involved in epithelial-mesenchymal interactions in kidney and lung morphogenesis that include epithelial differentiation and branching morphogenesis. This is Transcription factor 21 from Danio rerio (Zebrafish).